A 483-amino-acid polypeptide reads, in one-letter code: Replication factor C large subunit (483 aa).

44–51 is a binding site for ATP; the sequence is GSPGVGKT. The segment at 415–483 is disordered; the sequence is AVDHGGGIFA…DGQAGLSDFM (69 aa). The span at 430-443 shows a compositional bias: acidic residues; it reads AQSDTESDDDDDGD. Over residues 451-463 the composition is skewed to basic and acidic residues; sequence DEPKEESVNREQS.

This sequence belongs to the activator 1 small subunits family. RfcL subfamily. Heteromultimer composed of small subunits (RfcS) and large subunits (RfcL).

Functionally, part of the RFC clamp loader complex which loads the PCNA sliding clamp onto DNA. The chain is Replication factor C large subunit from Natronomonas pharaonis (strain ATCC 35678 / DSM 2160 / CIP 103997 / JCM 8858 / NBRC 14720 / NCIMB 2260 / Gabara) (Halobacterium pharaonis).